Here is a 725-residue protein sequence, read N- to C-terminus: Putative coiled-coil domain-containing protein 144B (725 aa).

Positions 1-11 (MASWGGEKRGG) are enriched in basic and acidic residues. Disordered regions lie at residues 1–25 (MASWGGEKRGGAEGSPKLAVYATRK), 87–188 (AARS…NLTE), 213–260 (LPEN…DCDR), 453–485 (NMNQNSDSGSTNNYKSLKPKLENLSSLPPDSDR), and 528–586 (EEEM…KVKN). Composition is skewed to polar residues over residues 129 to 150 (PESLPQNNNPDWHPTNLTLSDE) and 165 to 178 (PSVSPSMPENQSAT). A coiled-coil region spans residues 215-244 (ENKESKEAEQDLELTSEEEQERLKGCENKQ). Acidic residues predominate over residues 224–234 (QDLELTSEEEQ). A compositionally biased stretch (polar residues) spans 453–467 (NMNQNSDSGSTNNYK). Residues 490–546 (YLHEELQQDMQKFKNEVNTLEEEFLALKKENVQLHKEVEEEMEKHRSNSTELSGTLT) adopt a coiled-coil conformation. Positions 528 to 537 (EEEMEKHRSN) are enriched in basic and acidic residues. Residues 543–552 (GTLTDGTTVG) show a composition bias toward low complexity. Residues 563-583 (PRKENEEHDRPADKTANEKNK) show a composition bias toward basic and acidic residues. Residues 648-713 (LLKLKNNHCD…ALKQENGRKE (66 aa)) are a coiled coil.

This sequence belongs to the CCDC144 family.

The sequence is that of Putative coiled-coil domain-containing protein 144B from Homo sapiens (Human).